We begin with the raw amino-acid sequence, 388 residues long: 4-hydroxy-3-methylbut-2-en-1-yl diphosphate synthase (flavodoxin) (388 aa).

[4Fe-4S] cluster contacts are provided by Cys-280, Cys-283, Cys-315, and Glu-322. Residues 369-388 (MNSEGGPEATSSGSPVVTVS) form a disordered region. Residues 377–388 (ATSSGSPVVTVS) show a composition bias toward polar residues.

This sequence belongs to the IspG family. [4Fe-4S] cluster is required as a cofactor.

It carries out the reaction (2E)-4-hydroxy-3-methylbut-2-enyl diphosphate + oxidized [flavodoxin] + H2O + 2 H(+) = 2-C-methyl-D-erythritol 2,4-cyclic diphosphate + reduced [flavodoxin]. Its pathway is isoprenoid biosynthesis; isopentenyl diphosphate biosynthesis via DXP pathway; isopentenyl diphosphate from 1-deoxy-D-xylulose 5-phosphate: step 5/6. Functionally, converts 2C-methyl-D-erythritol 2,4-cyclodiphosphate (ME-2,4cPP) into 1-hydroxy-2-methyl-2-(E)-butenyl 4-diphosphate. This chain is 4-hydroxy-3-methylbut-2-en-1-yl diphosphate synthase (flavodoxin), found in Mycolicibacterium paratuberculosis (strain ATCC BAA-968 / K-10) (Mycobacterium paratuberculosis).